A 463-amino-acid polypeptide reads, in one-letter code: MPPAPPDQKPCHLQPAPYRALSETILFGSLNEERWWHSTAPILSRLLISSNYDVDVQYKYLSLYRHLVLPALGPYPQRDPETGIIATQWRSGMVLTGLPIEFSNNVARALIRIGVDPVTADSGTAQDPFNTARPKGYLETAARLLPGVDLTRFYEFETELVITKEEEAVLQANPDLFKSPWKSQILTAMDLQKSGTVLVKAYFYPQPKSAVTGRSTEELLVNAIRKVDRESRFETQLANLERYMERRRRGLHVPVVTADKPPPTEADKTFDACSFFPHFLSTDLVEPGKSRVKFYASERHVNLKMVEDIWTFGGLRRDPDALKGLELLRHFWADIQMREGYYTMPRGFCELGKSSAGFEAPMMFHFHLDGSQSPFPDPQMYVCVFGMNSRKLVEGLTTFYRRLGWEDMASHYQGNFLANYPDEDFEKAAHLCAYVSFAYKDGGAYVTLYNHSFNPLGDVALAN.

The brevianamide F site is built by Met93 and Glu101. Positions 112, 200, and 202 each coordinate dimethylallyl diphosphate. Tyr204 contributes to the brevianamide F binding site. Residues Lys293, Tyr295, Gln379, Tyr381, Tyr445, and Tyr449 each coordinate dimethylallyl diphosphate.

It belongs to the tryptophan dimethylallyltransferase family.

The enzyme catalyses brevianamide F + dimethylallyl diphosphate = tryprostatin B + diphosphate. It functions in the pathway mycotoxin biosynthesis. Brevianamide F prenyltransferase; part of the gene cluster that mediates the biosynthesis of fumitremorgins, indole alkaloids that carry not only intriguing chemical structures, but also interesting biological and pharmacological activities. The biosynthesis of fumitremorgin-type alkaloids begins by condensation of the two amino acids L-tryptophan and L-proline to brevianamide F, catalyzed by the non-ribosomal peptide synthetase ftmPS/ftmA. Brevianamide F is then prenylated by the prenyltransferase ftmPT1/ftmB in the presence of dimethylallyl diphosphate, resulting in the formation of tryprostatin B. The three cytochrome P450 monooxygenases, ftmP450-1/ftmC, ftmP450-2/ftmE and ftmP450-3/FtmG, are responsible for the conversion of tryprostatin B to 6-hydroxytryprostatin B, tryprostatin A to fumitremorgin C and fumitremorgin C to 12,13-dihydroxyfumitremorgin C, respectively. The putative methyltransferase ftmMT/ftmD is expected for the conversion of 6-hydroxytryprostatin B to tryprostatin A. FtmPT2/FtmH catalyzes the prenylation of 12,13-dihydroxyfumitre-morgin C in the presence of dimethylallyl diphosphate, resulting in the formation of fumitremorgin B. Fumitremorgin B is further converted to verruculogen by ftmOx1/ftmF via the insertion of an endoperoxide bond between the two prenyl moieties. Finally, verruculogen is further converted to fumitremorgin A by the verruculogen prenyltransferase ftmPT3. The chain is Tryprostatin B synthase from Neosartorya fischeri (strain ATCC 1020 / DSM 3700 / CBS 544.65 / FGSC A1164 / JCM 1740 / NRRL 181 / WB 181) (Aspergillus fischerianus).